The primary structure comprises 123 residues: Large ribosomal subunit protein uL14 (123 aa).

Belongs to the universal ribosomal protein uL14 family. In terms of assembly, part of the 50S ribosomal subunit. Forms a cluster with proteins L3 and L19. In the 70S ribosome, L14 and L19 interact and together make contacts with the 16S rRNA in bridges B5 and B8.

Functionally, binds to 23S rRNA. Forms part of two intersubunit bridges in the 70S ribosome. The sequence is that of Large ribosomal subunit protein uL14 from Citrobacter koseri (strain ATCC BAA-895 / CDC 4225-83 / SGSC4696).